We begin with the raw amino-acid sequence, 414 residues long: Histidine--tRNA ligase (414 aa).

This sequence belongs to the class-II aminoacyl-tRNA synthetase family. In terms of assembly, homodimer.

The protein localises to the cytoplasm. It catalyses the reaction tRNA(His) + L-histidine + ATP = L-histidyl-tRNA(His) + AMP + diphosphate + H(+). This Mycoplasma pneumoniae (strain ATCC 29342 / M129 / Subtype 1) (Mycoplasmoides pneumoniae) protein is Histidine--tRNA ligase (hisS).